A 196-amino-acid polypeptide reads, in one-letter code: Small ribosomal subunit protein uS4c (196 aa).

In terms of domain architecture, S4 RNA-binding spans 82-143; the sequence is MRLDNILFRL…KQKSKALIQN (62 aa).

This sequence belongs to the universal ribosomal protein uS4 family. Part of the 30S ribosomal subunit. Contacts protein S5. The interaction surface between S4 and S5 is involved in control of translational fidelity.

The protein localises to the plastid. It is found in the chloroplast. Functionally, one of the primary rRNA binding proteins, it binds directly to 16S rRNA where it nucleates assembly of the body of the 30S subunit. Its function is as follows. With S5 and S12 plays an important role in translational accuracy. The chain is Small ribosomal subunit protein uS4c (rps4) from Patersonia sp. (strain Lejeune 1997).